We begin with the raw amino-acid sequence, 314 residues long: tRNA dimethylallyltransferase 2 (314 aa).

An ATP-binding site is contributed by 8 to 15; the sequence is GPTGSGKS. 10-15 contributes to the substrate binding site; sequence TGSGKS.

Belongs to the IPP transferase family. As to quaternary structure, monomer. It depends on Mg(2+) as a cofactor.

The enzyme catalyses adenosine(37) in tRNA + dimethylallyl diphosphate = N(6)-dimethylallyladenosine(37) in tRNA + diphosphate. Functionally, catalyzes the transfer of a dimethylallyl group onto the adenine at position 37 in tRNAs that read codons beginning with uridine, leading to the formation of N6-(dimethylallyl)adenosine (i(6)A). The chain is tRNA dimethylallyltransferase 2 from Mycobacterium marinum (strain ATCC BAA-535 / M).